The sequence spans 778 residues: Receptor like protein 28 (778 aa).

A signal peptide spans 1–24 (MSGSHLRLRFLSLLLLCCVSSSTS). At 25–739 (SLFTFSYPVL…EEQEQVLNWK (715 aa)) the chain is on the extracellular side. 8 N-linked (GlcNAc...) asparagine glycosylation sites follow: asparagine 60, asparagine 72, asparagine 93, asparagine 106, asparagine 111, asparagine 147, asparagine 170, and asparagine 173. 5 LRR repeats span residues 99 to 123 (FHQL…EFGN), 125 to 147 (NKVE…SFSN), 148 to 171 (LSQL…VQNL), 172 to 195 (TNLS…LLMM), and 197 to 219 (FLSY…TSSK). An LRR 6; degenerate repeat occupies 220–240 (LEILYLGLKPFEGQILEPISK). LRR repeat units lie at residues 241-265 (LINL…LFSS), 266-291 (LKSL…LYIP), 293-313 (TLEK…ILKT), 314-338 (LQKL…LWRL), 340-363 (RLRS…VLVN), and 364-387 (SSME…PLSI). Residue asparagine 253 is glycosylated (N-linked (GlcNAc...) asparagine). 2 N-linked (GlcNAc...) asparagine glycosylation sites follow: asparagine 348 and asparagine 363. Residues 388–407 (KAFSAGYNNFSGEIPLSICN) form an LRR 13; degenerate repeat. Asparagine 396, asparagine 407, asparagine 420, asparagine 431, and asparagine 476 each carry an N-linked (GlcNAc...) asparagine glycan. LRR repeat units lie at residues 408 to 429 (RSSL…PQCL), 430 to 453 (SNLT…LCAG), 455 to 477 (SLQT…LLNC), 479 to 500 (SLEF…WLKA), 501 to 525 (LPNL…HQSP), 528 to 552 (FPEL…YFVN), 601 to 625 (LNSY…IGLL), 626 to 649 (KELI…LANA), 650 to 673 (TELE…LKTL), and 678 to 700 (YINV…SSFE). 2 N-linked (GlcNAc...) asparagine glycosylation sites follow: asparagine 632 and asparagine 648. Asparagine 680 carries N-linked (GlcNAc...) asparagine glycosylation. The helical transmembrane segment at 740 to 760 (AVATGYGTGLLLGLAIAQVIA) threads the bilayer. The Cytoplasmic portion of the chain corresponds to 761-778 (SYKPDWLVKIIGLFRFCF).

This sequence belongs to the RLP family.

It is found in the cell membrane. The polypeptide is Receptor like protein 28 (Arabidopsis thaliana (Mouse-ear cress)).